We begin with the raw amino-acid sequence, 403 residues long: Na(+)/H(+) antiporter NhaA (403 aa).

12 consecutive transmembrane segments (helical) span residues 25-45 (IAGLVLLVSMLVAFFWVNSPF), 70-90 (LILWINEGLMIVFFFLIGLEI), 105-125 (IALPAFAALGGMLVPAAIFLA), 136-156 (GWAVPAATDIVLALALLAMLG), 165-185 (VFLTALAIFDDFGTLVIIALA), 188-208 (EGLSLPSLLMAALGTLALIVL), 213-233 (VASLTAYVLVGVFVWVSVLES), 234-254 (GVHSTLAGVIIAWCIPMRVSG), 269-289 (VALLIVPLFAFFNAGIDLGGV), 302-322 (IILGLFVGKQVGVMLGVGLAV), 340-360 (GAALLSGVGFTMSLFVAGLAF), and 369-389 (VNLAVVVGSVLSATGGLVVLA).

The protein belongs to the NhaA Na(+)/H(+) (TC 2.A.33) antiporter family.

Its subcellular location is the cell inner membrane. It carries out the reaction Na(+)(in) + 2 H(+)(out) = Na(+)(out) + 2 H(+)(in). Na(+)/H(+) antiporter that extrudes sodium in exchange for external protons. The sequence is that of Na(+)/H(+) antiporter NhaA from Maricaulis maris (strain MCS10) (Caulobacter maris).